A 76-amino-acid polypeptide reads, in one-letter code: U7-lycotoxin-Ls1b (76 aa).

The signal sequence occupies residues 1 to 22 (MKLISFTGLALLLIVSLIDVEA). The propeptide occupies 23–26 (QNEG).

Belongs to the neurotoxin 19 (CSTX) family. 07 (U7-Lctx) subfamily. In terms of processing, contains 4 disulfide bonds. As to expression, expressed by the venom gland.

The protein resides in the secreted. This is U7-lycotoxin-Ls1b from Lycosa singoriensis (Wolf spider).